The sequence spans 113 residues: Transcription initiation factor IIA subunit 2 (113 aa).

This sequence belongs to the TFIIA subunit 2 family. TFIIA is a heterodimer of the large unprocessed subunit 1 and a small subunit gamma. It was originally believed to be a heterotrimer of an alpha, a beta and a gamma subunit.

It localises to the nucleus. Its function is as follows. TFIIA is a component of the transcription machinery of RNA polymerase II and plays an important role in transcriptional activation. TFIIA in a complex with TBP mediates transcriptional activity. This chain is Transcription initiation factor IIA subunit 2, found in Caenorhabditis elegans.